The following is a 96-amino-acid chain: Acylphosphatase (96 aa).

The region spanning 4–96 (RCEFLIFGKV…ESLNDFEILR (93 aa)) is the Acylphosphatase-like domain. Residues Arg-19 and Asn-42 contribute to the active site.

This sequence belongs to the acylphosphatase family.

The enzyme catalyses an acyl phosphate + H2O = a carboxylate + phosphate + H(+). This is Acylphosphatase (acyP) from Helicobacter hepaticus (strain ATCC 51449 / 3B1).